The primary structure comprises 691 residues: DNA ligase (691 aa).

NAD(+)-binding positions include 41 to 45, 90 to 91, and Glu-130; these read DAEYD and SL. The active-site N6-AMP-lysine intermediate is Lys-132. The NAD(+) site is built by Arg-153, Glu-190, Lys-307, and Lys-331. 4 residues coordinate Zn(2+): Cys-425, Cys-428, Cys-443, and Cys-449. One can recognise a BRCT domain in the interval 610–691; sequence APQGVLAGKT…LHQLLEGNTP (82 aa).

This sequence belongs to the NAD-dependent DNA ligase family. LigA subfamily. It depends on Mg(2+) as a cofactor. The cofactor is Mn(2+).

The enzyme catalyses NAD(+) + (deoxyribonucleotide)n-3'-hydroxyl + 5'-phospho-(deoxyribonucleotide)m = (deoxyribonucleotide)n+m + AMP + beta-nicotinamide D-nucleotide.. In terms of biological role, DNA ligase that catalyzes the formation of phosphodiester linkages between 5'-phosphoryl and 3'-hydroxyl groups in double-stranded DNA using NAD as a coenzyme and as the energy source for the reaction. It is essential for DNA replication and repair of damaged DNA. The sequence is that of DNA ligase from Burkholderia ambifaria (strain MC40-6).